The sequence spans 121 residues: SLFELGKMILQETGKNSVKSYGVYGCNCGVGGRGKPKDATDRCCYVHKCCYKKLTGCDPKKDRYSYSWKDKTIVCGENNPCLKELCECDKAVAICLRENLGTYNKKYRYHLKPFCKKADPC.

7 disulfide bridges follow: cysteine 26/cysteine 115, cysteine 28/cysteine 44, cysteine 43/cysteine 95, cysteine 49/cysteine 121, cysteine 50/cysteine 88, cysteine 57/cysteine 81, and cysteine 75/cysteine 86. Residues 105–117 (KKYRYHLKPFCKK) are important for membrane-damaging activities in eukaryotes and bacteria; heparin-binding.

It belongs to the phospholipase A2 family. Group II subfamily. K49 sub-subfamily. In terms of assembly, homodimer; non-covalently linked. In terms of tissue distribution, expressed by the venom gland.

It is found in the secreted. Its function is as follows. Snake venom phospholipase A2 (PLA2) homolog that lacks enzymatic activity. Shows myotoxic and edema-inducing activities in vivo. A model of myotoxic mechanism has been proposed: an apo Lys49-PLA2 is activated by the entrance of a hydrophobic molecule (e.g. fatty acid) at the hydrophobic channel of the protein leading to a reorientation of a monomer. This reorientation causes a transition between 'inactive' to 'active' states, causing alignment of C-terminal and membrane-docking sites (MDoS) side-by-side and putting the membrane-disruption sites (MDiS) in the same plane, exposed to solvent and in a symmetric position for both monomers. The MDoS region stabilizes the toxin on membrane by the interaction of charged residues with phospholipid head groups. Subsequently, the MDiS region destabilizes the membrane with penetration of hydrophobic residues. This insertion causes a disorganization of the membrane, allowing an uncontrolled influx of ions (i.e. calcium and sodium), and eventually triggering irreversible intracellular alterations and cell death. In Bothrops leucurus (Whitetail lancehead), this protein is Basic phospholipase A2 homolog blK-PLA2.